Reading from the N-terminus, the 129-residue chain is Small ribosomal subunit protein uS12 (129 aa).

Asp89 carries the 3-methylthioaspartic acid modification.

Belongs to the universal ribosomal protein uS12 family. In terms of assembly, part of the 30S ribosomal subunit. Contacts proteins S8 and S17. May interact with IF1 in the 30S initiation complex.

Its function is as follows. With S4 and S5 plays an important role in translational accuracy. In terms of biological role, interacts with and stabilizes bases of the 16S rRNA that are involved in tRNA selection in the A site and with the mRNA backbone. Located at the interface of the 30S and 50S subunits, it traverses the body of the 30S subunit contacting proteins on the other side and probably holding the rRNA structure together. The combined cluster of proteins S8, S12 and S17 appears to hold together the shoulder and platform of the 30S subunit. The polypeptide is Small ribosomal subunit protein uS12 (Helicobacter hepaticus (strain ATCC 51449 / 3B1)).